The primary structure comprises 178 residues: Ribosome maturation factor RimP (178 aa).

Belongs to the RimP family.

It localises to the cytoplasm. Required for maturation of 30S ribosomal subunits. This Cutibacterium acnes (strain DSM 16379 / KPA171202) (Propionibacterium acnes) protein is Ribosome maturation factor RimP.